Here is a 465-residue protein sequence, read N- to C-terminus: Midnolin (465 aa).

The 75-residue stretch at 32–106 (MSLAIHSTTG…LTLVPTVEAG (75 aa)) folds into the Ubiquitin-like domain. Disordered stretches follow at residues 185–262 (SVAT…SRKP) and 400–445 (RLRR…GLDF). Composition is skewed to low complexity over residues 195-219 (RPVS…PSPV) and 240-257 (SPPA…SPTP). Positions 397–424 (QQKRLRRKARRDARGPYHWTPSRKAGRS) are required for nucleolar localization.

Interacts with GCK; the interaction occurs preferentially at low glucose levels. Interacts with the proteasome. In terms of tissue distribution, expressed at high levels in brain and liver with significantly lower levels in muscle.

The protein resides in the nucleus. It is found in the cytoplasm. Its subcellular location is the cytosol. The protein localises to the nucleolus. Functionally, facilitates the ubiquitin-independent proteasomal degradation of stimulus-induced transcription factors such as FOSB, EGR1, NR4A1, and IRF4 to the proteasome for degradation. Promotes also the degradation of other substrates such as CBX4. Plays a role in inhibiting the activity of glucokinase GCK and both glucose-induced and basal insulin secretion. The protein is Midnolin (Midn) of Mus musculus (Mouse).